We begin with the raw amino-acid sequence, 394 residues long: MLLEAPVYKEIFGAVTIHEVQKVIKMDTETEDVPVYTISNIPREKIYNLLGKMAIIVPMKNEKLHLVDGVLKAIPHKCPIIIVSNSKREGPNRYKLEVDLVRHFYNLTHSKVIMIHQKDPGLAKAFKEVGYTDILDGKGKVRSGKGEGMIIGMLLAKAIGAEYIGFVDADNYIPGSVNEYVKDYAAGFLMSESDYTMVRLHWRHKPKVTKGTLYFKKWGRVSEITNHYLNLLISEHTAFETTIMVTGNAGEHAMTMKLAEIMPFSTGYSVEPYEIVYLLERFGKWENVDEFKEVFDQGIEIFQIETLNPHFHEDKGQEHVKEMLLLSLATIYHSKLATNSLKKKILNDLREHKILKENEEPPKPLVMRPIKEIPIKEWMEIVEDNSETLLRFEL.

Belongs to the glycosyltransferase 2 family.

It is found in the cytoplasm. The enzyme catalyses (2R)-3-phosphoglycerate + GDP-alpha-D-mannose = 2-O-(alpha-D-mannosyl)-3-phosphoglycerate + GDP + H(+). The protein operates within carbohydrate biosynthesis; 2-(alpha-D-mannosyl)-D-glycerate biosynthesis; 2-(alpha-D-mannosyl)-D-glycerate from GDP-alpha-D-mannose (MPG route): step 1/2. Transfers a mannosyl group from GDP-mannose to phosphoglycerate to form mannosyl-3-phosphoglycerate (MPG). This is Mannosyl-3-phosphoglycerate synthase (mngA) from Pyrococcus abyssi (strain GE5 / Orsay).